The primary structure comprises 192 residues: Ion-translocating oxidoreductase complex subunit B (192 aa).

Residues 1–26 (MNTIWIAVGALTFLGLVFGAILGYAS) form a hydrophobic region. A 4Fe-4S domain is found at 32–91 (EDDPVVEKIDAILPQSQCGQCGYPGCRPYAEAVGLQGEKINRCAPGGEAVMLKIADLLNV). [4Fe-4S] cluster contacts are provided by Cys49, Cys52, Cys57, Cys74, Cys117, Cys120, Cys123, Cys127, Cys147, Cys150, Cys153, and Cys157. 4Fe-4S ferredoxin-type domains follow at residues 108–137 (MLAVIDENHCIGCTKCIQACPVDAIVGATR) and 138–167 (AMHTVMSDLCTGCNLCVDPCPTHCIELRPV).

It belongs to the 4Fe4S bacterial-type ferredoxin family. RnfB subfamily. As to quaternary structure, the complex is composed of six subunits: RsxA, RsxB, RsxC, RsxD, RsxE and RsxG. It depends on [4Fe-4S] cluster as a cofactor.

It localises to the cell inner membrane. Functionally, part of a membrane-bound complex that couples electron transfer with translocation of ions across the membrane. Required to maintain the reduced state of SoxR. This chain is Ion-translocating oxidoreductase complex subunit B, found in Salmonella arizonae (strain ATCC BAA-731 / CDC346-86 / RSK2980).